The chain runs to 672 residues: MSKLARLEREEIMECQVMWEPDSKKDTQMDRFRAAVGTACGLALGNYDDLYHWSVRSYSDFWAEFWKFSGIVCSRMYDEVVDTSKGIADVPEWFRGSRLNYAENLLRHKENDRVALYVAREGREEIAKVTFEELRQQVALFAAAMRKMGVKKGDRVVGYLPNSAHAVEAMLAAASIGAIWSSTSPDFGVNGVLDRFSQIQPKLIFSVEAVVYNGKEHGHLEKLQRVVKGLPDLQRVVLIPYVLPREKIDISKIPNSMFLDDFLASGTGAQAPQLEFEQLPFSHPLFIMFSSGTTGAPKCMVHSAGGTLIQHLKEHVLHGNMTSSDILLYYTTVGWMMWNWMVSALATGASLVLYDGSPLVPTPNVLWDLVDRIGITILGTGAKWLSVLEEKDMKPMETHNLHTLHTILSTGSPLKAQSYEYVYRCIKSTVLLGSISGGTDIISCFMGQNSSIPVYKGEIQARNLGMAVEAWDEEGKTVWGASGELVCTKPIPCQPTHFWNDENGSKYRKAYFSKYPGVWAHGDYCRINPKTGGIVMLGRSDGTLNPNGVRFGSSEIYNIVEAFDEVEDSLCVPQYNRDGEERVVLFLKMASGHTFQPDLVKHIRDAIRLGLSARHVPSLILETQGIPYTINGKKVEVAVKQVIAGKTVEHRGAFSNPESLDLYRDIPELQDF.

This sequence belongs to the ATP-dependent AMP-binding enzyme family. In terms of tissue distribution, abundant in male subcutaneous white adipose tissue after weaning. In white adipose tissue, it is preferentially detected in mature adipocytes but not in preadipocytes. The expression in primary preadipocytes increases during the adipocyte differentiation. In brain, it is expressed in the midbrain, pons/medulla, cerebral cortex, hippocampus and cerebellum. The expression in the cerebellum is restricted primarily to glial cells, while in the cerebral cortex, it is restricted to neuronal cells.

The protein localises to the cytoplasm. It is found in the cytosol. It catalyses the reaction acetoacetate + ATP + CoA = acetoacetyl-CoA + AMP + diphosphate. Its function is as follows. Converts acetoacetate to acetoacetyl-CoA in the cytosol. Ketone body-utilizing enzyme, responsible for the synthesis of cholesterol and fatty acids. This is Acetoacetyl-CoA synthetase (Aacs) from Rattus norvegicus (Rat).